The primary structure comprises 769 residues: Phenylalanine--tRNA ligase beta subunit (769 aa).

Residues 40 to 141 (GKLLTIARVA…GEPIPGCEPD (102 aa)) enclose the tRNA-binding domain. The region spanning 389 to 467 (PAPPPIELPL…RMIGYDSIAP (79 aa)) is the B5 domain. Residues Asp-445, Asp-451, Glu-454, and Glu-455 each contribute to the Mg(2+) site. Positions 676–768 (RRYPSSAFDL…GMRAKGYELR (93 aa)) constitute an FDX-ACB domain.

This sequence belongs to the phenylalanyl-tRNA synthetase beta subunit family. Type 1 subfamily. Tetramer of two alpha and two beta subunits. Requires Mg(2+) as cofactor.

The protein resides in the cytoplasm. The catalysed reaction is tRNA(Phe) + L-phenylalanine + ATP = L-phenylalanyl-tRNA(Phe) + AMP + diphosphate + H(+). The chain is Phenylalanine--tRNA ligase beta subunit from Solibacter usitatus (strain Ellin6076).